Here is a 210-residue protein sequence, read N- to C-terminus: Protein-methionine-sulfoxide reductase heme-binding subunit MsrQ (210 aa).

Transmembrane regions (helical) follow at residues 8–28, 37–57, 75–95, 110–130, 147–167, and 169–189; these read LAVF…AWIF, VLVE…LAMT, LGLW…LFIL, PYII…VTSN, LVYV…RADL, and EWAL…PMIA.

It belongs to the MsrQ family. As to quaternary structure, heterodimer of a catalytic subunit (MsrP) and a heme-binding subunit (MsrQ). It depends on FMN as a cofactor. Requires heme b as cofactor.

It is found in the cell inner membrane. Functionally, part of the MsrPQ system that repairs oxidized periplasmic proteins containing methionine sulfoxide residues (Met-O), using respiratory chain electrons. Thus protects these proteins from oxidative-stress damage caused by reactive species of oxygen and chlorine generated by the host defense mechanisms. MsrPQ is essential for the maintenance of envelope integrity under bleach stress, rescuing a wide series of structurally unrelated periplasmic proteins from methionine oxidation. MsrQ provides electrons for reduction to the reductase catalytic subunit MsrP, using the quinone pool of the respiratory chain. This is Protein-methionine-sulfoxide reductase heme-binding subunit MsrQ from Pseudomonas syringae pv. tomato (strain ATCC BAA-871 / DC3000).